Consider the following 416-residue polypeptide: Tyrosine--tRNA ligase (416 aa).

Position 34 (tyrosine 34) interacts with L-tyrosine. A 'HIGH' region motif is present at residues 39–48 (PTGDSLHIGH). L-tyrosine is bound by residues tyrosine 165 and glutamine 169. The 'KMSKS' region signature appears at 227–231 (KFGKT). Lysine 230 contributes to the ATP binding site. Positions 349–416 (KNIVEWLVDT…KKKYFLARVK (68 aa)) constitute an S4 RNA-binding domain.

The protein belongs to the class-I aminoacyl-tRNA synthetase family. TyrS type 1 subfamily. Homodimer.

It localises to the cytoplasm. The enzyme catalyses tRNA(Tyr) + L-tyrosine + ATP = L-tyrosyl-tRNA(Tyr) + AMP + diphosphate + H(+). Catalyzes the attachment of tyrosine to tRNA(Tyr) in a two-step reaction: tyrosine is first activated by ATP to form Tyr-AMP and then transferred to the acceptor end of tRNA(Tyr). In Ligilactobacillus salivarius (strain UCC118) (Lactobacillus salivarius), this protein is Tyrosine--tRNA ligase.